Reading from the N-terminus, the 168-residue chain is CASP-like protein 1U1 (168 aa).

Topologically, residues 1-6 (MDGAAR) are cytoplasmic. The helical transmembrane segment at 7–27 (AVSLFFRIAVVGLSVAAAVVM) threads the bilayer. Residues 28 to 49 (ATASQAFPFNYGGAVSYTKYPA) are Extracellular-facing. A helical transmembrane segment spans residues 50 to 70 (FVYFVVAAVVSAVCSAAALYL). The Cytoplasmic portion of the chain corresponds to 71 to 80 (SVVREAAAGW). A helical transmembrane segment spans residues 81–101 (AVALLDVVTMGLLFSAAGAVF). Over 102 to 138 (AVRRMAPLYLGVAGADTVAGRWVNGEFCHAAGAFCWR) the chain is Extracellular. Residues 139–159 (VTTSAIICAFAAAAVSVAVLT) traverse the membrane as a helical segment. Residues 160-168 (KGARHRGKH) are Cytoplasmic-facing.

The protein belongs to the Casparian strip membrane proteins (CASP) family. Homodimer and heterodimers.

The protein localises to the cell membrane. This is CASP-like protein 1U1 from Oryza sativa subsp. japonica (Rice).